Consider the following 358-residue polypeptide: Cinnamyl alcohol dehydrogenase 1 (358 aa).

Positions 21–349 constitute an Enoyl reductase (ER) domain; that stretch reads GILTPYTYTL…KNDVRYRFVV (329 aa). Cysteine 48 contributes to the Zn(2+) binding site. Serine 50 provides a ligand contact to NADP(+). Zn(2+) is bound by residues histidine 70, glutamate 71, cysteine 101, cysteine 104, cysteine 107, cysteine 115, and cysteine 164. Residues threonine 168, 189–194, 212–217, threonine 252, glycine 276, and 299–301 each bind NADP(+); these read GLGGVG, SSSDKK, and SFV.

It belongs to the zinc-containing alcohol dehydrogenase family. As to quaternary structure, homodimer. Zn(2+) is required as a cofactor.

It carries out the reaction (E)-cinnamyl alcohol + NADP(+) = (E)-cinnamaldehyde + NADPH + H(+). The catalysed reaction is (E)-coniferol + NADP(+) = (E)-coniferaldehyde + NADPH + H(+). The enzyme catalyses (E)-sinapyl alcohol + NADP(+) = (E)-sinapaldehyde + NADPH + H(+). It catalyses the reaction (E)-4-coumaroyl alcohol + NADP(+) = (E)-4-coumaraldehyde + NADPH + H(+). Its pathway is aromatic compound metabolism; phenylpropanoid biosynthesis. Involved in lignin biosynthesis. Catalyzes the final step specific for the production of lignin monomers. Catalyzes the NADPH-dependent reduction of coniferaldehyde, 5-hydroxyconiferaldehyde, sinapaldehyde, 4-coumaraldehyde and caffeyl aldehyde to their respective alcohols. Can use coumaraldehyde and, with a lower efficiency, coniferaldehyde and sinapaldehyde as substrates. The sequence is that of Cinnamyl alcohol dehydrogenase 1 from Medicago truncatula (Barrel medic).